The chain runs to 137 residues: Universal stress protein in QAH/OAS sulfhydrylase 3'region (137 aa).

This sequence belongs to the universal stress protein A family.

The polypeptide is Universal stress protein in QAH/OAS sulfhydrylase 3'region (Thermus aquaticus).